Reading from the N-terminus, the 113-residue chain is Large ribosomal subunit protein bL19 (113 aa).

The protein belongs to the bacterial ribosomal protein bL19 family.

In terms of biological role, this protein is located at the 30S-50S ribosomal subunit interface and may play a role in the structure and function of the aminoacyl-tRNA binding site. The protein is Large ribosomal subunit protein bL19 of Desulfitobacterium hafniense (strain DSM 10664 / DCB-2).